Here is a 248-residue protein sequence, read N- to C-terminus: DNA polymerase sliding clamp (248 aa).

The protein belongs to the PCNA family. As to quaternary structure, homotrimer. The subunits circularize to form a toroid; DNA passes through its center. Replication factor C (RFC) is required to load the toroid on the DNA.

Its function is as follows. Sliding clamp subunit that acts as a moving platform for DNA processing. Responsible for tethering the catalytic subunit of DNA polymerase and other proteins to DNA during high-speed replication. This chain is DNA polymerase sliding clamp, found in Nitrosopumilus maritimus (strain SCM1).